A 388-amino-acid polypeptide reads, in one-letter code: Mannitol-1-phosphate 5-dehydrogenase (388 aa).

Position 5–16 (5–16 (AIQFGGGNIGRG)) interacts with NAD(+). The active site involves Lys213.

It belongs to the mannitol dehydrogenase family. Monomer.

The catalysed reaction is D-mannitol 1-phosphate + NAD(+) = beta-D-fructose 6-phosphate + NADH + H(+). Catalyzes the NAD(H)-dependent interconversion of D-fructose 6-phosphate and D-mannitol 1-phosphate in the mannitol metabolic pathway. This Aspergillus clavatus (strain ATCC 1007 / CBS 513.65 / DSM 816 / NCTC 3887 / NRRL 1 / QM 1276 / 107) protein is Mannitol-1-phosphate 5-dehydrogenase (mpdA).